The chain runs to 1174 residues: Male determiner protein Mdmd(V) (1174 aa).

The segment covering 1–15 (MNATDAESRKPENKP) has biased composition (basic and acidic residues). Disordered regions lie at residues 1-51 (MNAT…SGQR), 79-110 (RKDG…PVEL), and 136-259 (KQLS…LRRS). Residues 16 to 35 (SSESSSSGSTSGSSDGEVSS) show a composition bias toward low complexity. Residues 36 to 47 (KTYFKNNKSKVL) are compositionally biased toward polar residues. The span at 79–92 (RKDGSNEMLPKEDS) shows a compositional bias: basic and acidic residues. Polar residues predominate over residues 93-102 (INTNHNYTTD). The segment covering 138–153 (LSAYRSRSRSTRLSYS) has biased composition (low complexity). The span at 167 to 180 (SRYKKSVLRSRRTS) shows a compositional bias: basic residues. Basic and acidic residues predominate over residues 183-200 (HGRDSSTTKRSVSRDKDN). The span at 201-223 (RLRRRIGSSRSHTRSHSRFRRSE) shows a compositional bias: basic residues. Basic and acidic residues predominate over residues 235–259 (RSQERRHERRRSMSSDYERIALRRS). The MIF4G domain occupies 348-531 (KKYIHGYINK…KVLFQVRRDG (184 aa)). Over residues 597-608 (DSDGSFGSGSNS) the composition is skewed to low complexity. The interval 597-616 (DSDGSFGSGSNSETALSDCD) is disordered. The MI domain maps to 641-757 (ALRRTIYLTL…SWDVLDCIKL (117 aa)). Residues 840 to 857 (SAPSSSSSSSLSSELSAP) show a composition bias toward low complexity. Disordered regions lie at residues 840–1045 (SAPS…SRTK) and 1095–1133 (RKDN…NHSR). Positions 869–909 (KKKHKGKNKKMTKKKNPSKKKEKTKKIVGKNKIAAKNKTIK) are enriched in basic residues. Over residues 910-924 (RRTDKDNSSSKDNFL) the composition is skewed to basic and acidic residues. Positions 926–957 (SESSSNESISLDSLSSELFAPSSYSSSESSND) are enriched in low complexity. A compositionally biased stretch (basic residues) spans 963–1001 (KHKGKNKKMTKKKNPSNKREKTKKKLSKNKKAPNKNTKK). Over residues 1010–1020 (SSESSISESKS) the composition is skewed to low complexity. Residues 1034–1045 (RKKRVTSKSRTK) show a composition bias toward basic residues. Basic and acidic residues predominate over residues 1095–1118 (RKDNYGNRQNHEISQRHDSEIKRR). Positions 1119-1130 (REERKKRHHEKN) are enriched in basic residues.

It belongs to the CWC22 family. As to quaternary structure, component of the spliceosome C complex.

It localises to the nucleus speckle. In terms of biological role, male determiner protein (M-factor) that controls male somatic sexual differentiation. Acts as a dominant factor that regulates the mRNA splicing of transformer (tra) and doublesex (dsx) transcripts and promotes expression of male splice forms of tra and dsx. Probably acts as a component of the spliceosome C complex required for mRNA splicing factor and exon-junction complex (EJC) assembly. Hinders eIF4AIII from non-specifically binding RNA and escorts it to the splicing machinery to promote EJC assembly on mature mRNAs. The protein is Male determiner protein Mdmd(V) of Musca domestica (House fly).